The sequence spans 179 residues: Large ribosomal subunit protein uL5 (179 aa).

It belongs to the universal ribosomal protein uL5 family. As to quaternary structure, part of the 50S ribosomal subunit; part of the 5S rRNA/L5/L18/L25 subcomplex. Contacts the 5S rRNA and the P site tRNA. Forms a bridge to the 30S subunit in the 70S ribosome.

This is one of the proteins that bind and probably mediate the attachment of the 5S RNA into the large ribosomal subunit, where it forms part of the central protuberance. In the 70S ribosome it contacts protein S13 of the 30S subunit (bridge B1b), connecting the 2 subunits; this bridge is implicated in subunit movement. Contacts the P site tRNA; the 5S rRNA and some of its associated proteins might help stabilize positioning of ribosome-bound tRNAs. This is Large ribosomal subunit protein uL5 from Thioalkalivibrio sulfidiphilus (strain HL-EbGR7).